We begin with the raw amino-acid sequence, 136 residues long: Cytochrome b5 (136 aa).

A Cytochrome b5 heme-binding domain is found at 5–81; that stretch reads TKVFTLAEVS…LDEYYVGDID (77 aa). 2 residues coordinate heme: His-40 and His-64. A helical membrane pass occupies residues 107–127; that stretch reads FVVKLLQFLVPLIILGVAFGI.

It belongs to the cytochrome b5 family. As to expression, is highly expressed in developing seeds, moderately expressed in flowers, and is expressed at low levels in the leaf.

It localises to the endoplasmic reticulum membrane. The protein localises to the microsome membrane. Functionally, cytochrome b5 is a membrane bound hemoprotein which function as an electron carrier for several membrane bound oxygenases. May play a key role in the modification by desaturation of fatty acids in the endoplasmic reticulum, which in the developing seed is utilized for membrane synthesis and in the developmentally regulated production of large amounts of storage lipids. Is involved in the reduction of cytochrome P-450 and may therefore be involved in flavonoid biosynthesis in the petals. This Nicotiana tabacum (Common tobacco) protein is Cytochrome b5.